A 170-amino-acid polypeptide reads, in one-letter code: Methanogen homoaconitase small subunit (170 aa).

Positions 24–27 (YLRT) match the YLRT motif.

Belongs to the LeuD family. LeuD type 2 subfamily. In terms of assembly, heterotetramer of 2 HacA and 2 HacB proteins. Cannot form a complex with LeuC.

The enzyme catalyses (2R)-homocitrate = (2R,3S)-homoisocitrate. It carries out the reaction (2R)-homocitrate = cis-homoaconitate + H2O. The catalysed reaction is (2R,3S)-homoisocitrate = cis-homoaconitate + H2O. It catalyses the reaction cis-(homo)2aconitate + H2O = (2R,3S)-iso(homo)2citrate. The enzyme catalyses cis-(homo)3aconitate + H2O = (2R,3S)-iso(homo)3citrate. It carries out the reaction (R)-malate = maleate + H2O. The catalysed reaction is cis-aconitate + H2O = D-threo-isocitrate. Its pathway is organic acid metabolism; 2-oxosuberate biosynthesis. In terms of biological role, component of a hydro-lyase with broad substrate specificity for cis-unsaturated tricarboxylic acids. Catalyzes both the reversible dehydration of (R)-homocitrate ((R)-2-hydroxybutane-1,2,4-tricarboxylate) to produce cis-homoaconitate ((Z)-but-1-ene-1,2,4-tricarboxylate), and its hydration to homoisocitrate ((1R,2S)-1-hydroxybutane-1,2,4-tricarboxylate). Is also able to hydrate the analogous longer chain substrates cis-homo(2)-aconitate, cis-homo(3)-aconitate, and even the non-physiological cis-homo(4)-aconitate with similar efficiency. These reactions are part of the biosynthesis pathway of coenzyme B. Can also catalyze the hydration of maleate to (R)-malate, and that of cis-aconitate. Cannot catalyze the hydration of citraconate and the dehydration of (S)-homocitrate, citramalate, 2-isopropylmalate, 3-isopropylmalate, citrate or threo-DL-isocitrate. The sequence is that of Methanogen homoaconitase small subunit (hacB) from Methanocaldococcus jannaschii (strain ATCC 43067 / DSM 2661 / JAL-1 / JCM 10045 / NBRC 100440) (Methanococcus jannaschii).